The primary structure comprises 124 residues: Protein TAR1 (124 aa).

The segment at 80 to 124 (KNRTPRHTGFSPSMTSCSKEHRQGTAPKLPSPNYNSGTEGTRFQI) is disordered. The segment covering 111–124 (PNYNSGTEGTRFQI) has biased composition (polar residues).

The protein localises to the mitochondrion. Functionally, may be involved in mtDNA stability or mitochondrial gene expression regulation at the post-transcriptional level. This Saccharomyces cerevisiae (strain ATCC 204508 / S288c) (Baker's yeast) protein is Protein TAR1 (TAR1).